Here is a 328-residue protein sequence, read N- to C-terminus: DNA-directed RNA polymerase subunit alpha (328 aa).

Residues 1–230 (MIQITGRKFK…IILDHFMFIE (230 aa)) form an alpha N-terminal domain (alpha-NTD) region. The alpha C-terminal domain (alpha-CTD) stretch occupies residues 257–328 (PEDVMSKKVE…FGLSLRKGDK (72 aa)).

Belongs to the RNA polymerase alpha chain family. As to quaternary structure, homodimer. The RNAP catalytic core consists of 2 alpha, 1 beta, 1 beta' and 1 omega subunit. When a sigma factor is associated with the core the holoenzyme is formed, which can initiate transcription.

The enzyme catalyses RNA(n) + a ribonucleoside 5'-triphosphate = RNA(n+1) + diphosphate. In terms of biological role, DNA-dependent RNA polymerase catalyzes the transcription of DNA into RNA using the four ribonucleoside triphosphates as substrates. In Fervidobacterium nodosum (strain ATCC 35602 / DSM 5306 / Rt17-B1), this protein is DNA-directed RNA polymerase subunit alpha.